The chain runs to 487 residues: Inosine-5'-monophosphate dehydrogenase (487 aa).

CBS domains lie at 93–149 (IVSD…NKTV) and 153–214 (MTPK…CKDE). Residues D248, 248-250 (DSS), and 298-300 (GIG) contribute to the NAD(+) site. The K(+) site is built by G300 and G302. IMP is bound at residue S303. Residue C305 coordinates K(+). Catalysis depends on C305, which acts as the Thioimidate intermediate. IMP contacts are provided by residues 338–340 (DGG), 361–362 (GS), and 385–389 (YRGMG). The Proton acceptor role is filled by R401. E415 serves as a coordination point for IMP. 3 residues coordinate K(+): E469, S470, and H471.

The protein belongs to the IMPDH/GMPR family. As to quaternary structure, homotetramer. K(+) is required as a cofactor.

The catalysed reaction is IMP + NAD(+) + H2O = XMP + NADH + H(+). It participates in purine metabolism; XMP biosynthesis via de novo pathway; XMP from IMP: step 1/1. Its activity is regulated as follows. Mycophenolic acid (MPA) is a non-competitive inhibitor that prevents formation of the closed enzyme conformation by binding to the same site as the amobile flap. In contrast, mizoribine monophosphate (MZP) is a competitive inhibitor that induces the closed conformation. MPA is a potent inhibitor of mammalian IMPDHs but a poor inhibitor of the bacterial enzymes. MZP is a more potent inhibitor of bacterial IMPDH. Its function is as follows. Catalyzes the conversion of inosine 5'-phosphate (IMP) to xanthosine 5'-phosphate (XMP), the first committed and rate-limiting step in the de novo synthesis of guanine nucleotides, and therefore plays an important role in the regulation of cell growth. The chain is Inosine-5'-monophosphate dehydrogenase from Pasteurella multocida (strain Pm70).